Reading from the N-terminus, the 1692-residue chain is Regulating synaptic membrane exocytosis protein 1 (1692 aa).

Positions 1-26 (MSSAVGPRGPRPPTVPPPMQELPDLS) are disordered. Residues 9–20 (GPRPPTVPPPMQ) show a composition bias toward pro residues. The region spanning 22–182 (LPDLSHLTEE…TKSGAWFFGS (161 aa)) is the RabBD domain. An FYVE-type zinc finger spans residues 110-170 (KDDAPTCGIC…VCNLCRKQQE (61 aa)). The Zn(2+) site is built by C116, C119, C132, C135, C140, C143, C162, and C165. Residues 183–199 (GPQQTSQDGTLSDTATG) show a composition bias toward polar residues. The segment at 183 to 555 (GPQQTSQDGT…CEDVELESES (373 aa)) is disordered. Residues 204-217 (VPREKKARLQERSR) show a composition bias toward basic and acidic residues. Over residues 223–234 (STAAASSQDAAP) the composition is skewed to low complexity. Over residues 305–357 (VEERERKERRESRRLEKGRSQDYPDTPEKRDEGKAADEEKQRKEEDYQTRYRS) the composition is skewed to basic and acidic residues. Over residues 377-388 (MHARVSRARHER) the composition is skewed to basic residues. A compositionally biased stretch (low complexity) spans 412–430 (RAPAAARASPPDSPRAYSA). Basic and acidic residues predominate over residues 462 to 475 (PELKAQEPLRKQSR). Positions 497-509 (RNDSLSSDQSESV) are enriched in polar residues. S500 is modified (phosphoserine). Over residues 515 to 527 (KPHRSKRGGKKRQ) the composition is skewed to basic residues. Positions 545–555 (SCEDVELESES) are enriched in acidic residues. Phosphoserine is present on S578. Residues 605–691 (RTTMPKDSGA…EPQVEIIVSR (87 aa)) enclose the PDZ domain. The tract at residues 698–732 (RIPESSHPPLESSSSSFESQKMERPSISVISPTSP) is disordered. Positions 700 to 716 (PESSHPPLESSSSSFES) are enriched in low complexity. A phosphoserine mark is found at S728 and S731. The C2 1 domain occupies 742–865 (LPGQLSVKLW…ALLDDEPHWY (124 aa)). Positions 870–1013 (HDESSLPLPQ…RTRDVDSQYL (144 aa)) are disordered. Residue S881 is modified to Phosphoserine. Residues 935–944 (STTLTVPEQQ) show a composition bias toward polar residues. The residue at position 977 (S977) is a Phosphoserine. Over residues 992 to 1009 (RHHDASRSPVDHRTRDVD) the composition is skewed to basic and acidic residues. A Phosphoserine modification is found at S1031. 2 disordered regions span residues 1118–1222 (NCLR…EHSS) and 1235–1278 (GGSA…PVRS). Composition is skewed to basic and acidic residues over residues 1128-1144 (SPER…DRRR) and 1157-1170 (PEND…ERSS). S1252 is subject to Phosphoserine. Over residues 1252–1265 (SPTQSPPADTSFSS) the composition is skewed to polar residues. T1254 is subject to Phosphothreonine. A phosphoserine mark is found at S1256, S1308, S1310, S1311, S1339, S1340, and S1342. Disordered stretches follow at residues 1332–1394 (CDNV…SGRS), 1408–1428 (LEHN…AGGK), and 1445–1495 (RSRS…GSIN). Residues 1345–1366 (SDVSAISRTSSASRLSSTSFMS) are compositionally biased toward low complexity. S1416 bears the Phosphoserine mark. The span at 1477 to 1490 (EMRKMVRQPSREST) shows a compositional bias: basic and acidic residues. One can recognise a C2 2 domain in the interval 1538–1656 (AMGDIQIGME…DLSSMVIGWY (119 aa)). S1677, S1680, S1683, and S1692 each carry phosphoserine.

In terms of assembly, binds RAB3A, RAB3B and RAB3D that have been activated by GTP-binding. Interacts with RAB3C, RAB10, RAB26 and RAB37. Binds UNC13A. Interacts with TSPOAP1 and RIMBP2. Interacts with PPFIA3 and PPFIA4. Interacts with ERC1. Binds SNAP25, SYT1 and CACNA1B. Interaction with SYT1 is enhanced by calcium ions. Interaction with SNAP25 is weaker in the presence of calcium ions. Post-translationally, phosphorylated by BRSK1. In terms of tissue distribution, expressed in melanocytes. Detected in brain and retina.

Its subcellular location is the cell membrane. The protein localises to the synapse. The protein resides in the presynaptic cell membrane. Functionally, rab effector involved in exocytosis. May act as scaffold protein that regulates neurotransmitter release at the active zone. Essential for maintaining normal probability of neurotransmitter release and for regulating release during short-term synaptic plasticity. Plays a role in dendrite formation by melanocytes. This is Regulating synaptic membrane exocytosis protein 1 (RIMS1) from Homo sapiens (Human).